Consider the following 285-residue polypeptide: tRNA (guanine-N(7)-)-methyltransferase (285 aa).

Residues glycine 102, 125 to 126 (EI), 160 to 161 (NA), and cysteine 180 contribute to the S-adenosyl-L-methionine site. Residue aspartate 183 is part of the active site. Residue 258–260 (TEE) participates in S-adenosyl-L-methionine binding.

The protein belongs to the class I-like SAM-binding methyltransferase superfamily. TrmB family. In terms of assembly, forms a complex with TRM82.

It is found in the nucleus. It carries out the reaction guanosine(46) in tRNA + S-adenosyl-L-methionine = N(7)-methylguanosine(46) in tRNA + S-adenosyl-L-homocysteine. The protein operates within tRNA modification; N(7)-methylguanine-tRNA biosynthesis. Its function is as follows. Catalyzes the formation of N(7)-methylguanine at position 46 (m7G46) in tRNA. This is tRNA (guanine-N(7)-)-methyltransferase from Candida glabrata (strain ATCC 2001 / BCRC 20586 / JCM 3761 / NBRC 0622 / NRRL Y-65 / CBS 138) (Yeast).